We begin with the raw amino-acid sequence, 206 residues long: Sclerostin domain-containing protein 1 (206 aa).

Positions 1–23 (MLPPAIHLSLIPLLCILMKNCLA) are cleaved as a signal peptide. The disordered stretch occupies residues 42-62 (AHPSSNSTLNQARNGGRHFSS). A compositionally biased stretch (polar residues) spans 43–62 (HPSSNSTLNQARNGGRHFSS). The N-linked (GlcNAc...) asparagine glycan is linked to asparagine 47. Cystine bridges form between cysteine 75–cysteine 133, cysteine 89–cysteine 147, cysteine 100–cysteine 163, and cysteine 104–cysteine 165. The CTCK domain maps to 75–170 (CRELRSTKYI…TACKCKRYTR (96 aa)). The N-linked (GlcNAc...) asparagine glycan is linked to asparagine 173. Residues 176-206 (SHNFESVSPAKPAQHHRERKRASKSSKHSLS) are disordered. The span at 188–206 (AQHHRERKRASKSSKHSLS) shows a compositional bias: basic residues.

Belongs to the sclerostin family. Interacts with BMP2, BMP4, BMP6 and BMP7 with high affinity. Highly expressed within the maximally sensitized/receptive endometrium. Weakly expressed in brain, kidney and the female reproductive tract. Expressed in the dermal papilla (DP) and at high level in the precortex of both anagen vibrissae and pelage follicles. Dynymic expression during the hair cycle.

The protein localises to the secreted. Its function is as follows. Directly antagonizes activity of BMP2, BMP4, BMP6 and BMP7 in a dose-dependent manner. May be involved in the onset of endometrial receptivity for implantation/sensitization for the decidual cell reaction. Enhances Wnt signaling and inhibits TGF-beta signaling. The sequence is that of Sclerostin domain-containing protein 1 (Sostdc1) from Rattus norvegicus (Rat).